A 59-amino-acid chain; its full sequence is Large ribosomal subunit protein bL32 (59 aa).

The interval 1 to 59 (MAVQQNRKTPSKRGMRRSHDALSGPALSVEPQTGETHRRHHVSPDGYYRGRKVMQGRED) is disordered. Over residues 49-59 (RGRKVMQGRED) the composition is skewed to basic residues.

Belongs to the bacterial ribosomal protein bL32 family.

The sequence is that of Large ribosomal subunit protein bL32 from Alkalilimnicola ehrlichii (strain ATCC BAA-1101 / DSM 17681 / MLHE-1).